A 420-amino-acid polypeptide reads, in one-letter code: Tol-Pal system protein TolB (420 aa).

The N-terminal stretch at 1–21 is a signal peptide; it reads MKLFVHLVLFISLFIPYFTKA.

This sequence belongs to the TolB family. The Tol-Pal system is composed of five core proteins: the inner membrane proteins TolA, TolQ and TolR, the periplasmic protein TolB and the outer membrane protein Pal. They form a network linking the inner and outer membranes and the peptidoglycan layer.

Its subcellular location is the periplasm. Its function is as follows. Part of the Tol-Pal system, which plays a role in outer membrane invagination during cell division and is important for maintaining outer membrane integrity. The polypeptide is Tol-Pal system protein TolB (Wolbachia pipientis wMel).